The sequence spans 535 residues: Beta-glucosidase 20 (535 aa).

The first 24 residues, 1–24 (MGRFHKFPLLGLVLFLGLTGSLIA), serve as a signal peptide directing secretion. Positions 56 and 159 each coordinate a beta-D-glucoside. Residue N187 is glycosylated (N-linked (GlcNAc...) asparagine). A beta-D-glucoside is bound at residue 204-205 (NE). E205 (proton donor) is an active-site residue. C224 and C235 form a disulfide bridge. Residues Y351 and E424 each coordinate a beta-D-glucoside. The active-site Nucleophile is E424. N468 carries an N-linked (GlcNAc...) asparagine glycan. A beta-D-glucoside is bound by residues W475, 482–483 (EW), and F491. N501 is a glycosylation site (N-linked (GlcNAc...) asparagine). The short motif at 532-535 (HDEL) is the Prevents secretion from ER element.

It belongs to the glycosyl hydrolase 1 family.

Its subcellular location is the endoplasmic reticulum lumen. The catalysed reaction is Hydrolysis of terminal, non-reducing beta-D-glucosyl residues with release of beta-D-glucose.. The sequence is that of Beta-glucosidase 20 from Arabidopsis thaliana (Mouse-ear cress).